A 535-amino-acid polypeptide reads, in one-letter code: Sucrose transport protein SUT5 (535 aa).

Residues 1–53 (MEEGRRGDREGKSAAGWTALSTTKTTLEEKRRLQANGSVGGDAGTSGFRRIVR) lie on the Cytoplasmic side of the membrane. A helical membrane pass occupies residues 54 to 74 (LFFACMVAGGIQYGWALQLSL). Over 75 to 87 (LSPYSQTLGISHS) the chain is Extracellular. The chain crosses the membrane as a helical span at residues 88-108 (YVSLTWICGPIAGFVVQPIVG). The Cytoplasmic portion of the chain corresponds to 109-122 (YYSDRCTMKMGRRR). Residues 123–143 (PFILVGCLIICISVMIIGFSA) traverse the membrane as a helical segment. Topologically, residues 144-163 (DIGRHLGDTKEHCSTYTGPR) are extracellular. A helical transmembrane segment spans residues 164 to 184 (WSAAMVYIVGFWFLDFANNTV). Topologically, residues 185–203 (QGPARAMMADLSAGHHGPN) are cytoplasmic. A helical transmembrane segment spans residues 204–224 (VGQSIFSLWMAIGSVLGYLSG). The Extracellular segment spans residues 225–249 (ANGKWHEWFPWLKTAACCDACANLK). The chain crosses the membrane as a helical span at residues 250–270 (GAFFTAVLLIVVSMTVTMYLA). The Cytoplasmic portion of the chain corresponds to 271 to 302 (DEMPLDKQDVDTSGGGGCAVFVDLFKSLRNLP). Residues 303–323 (PAMFKVLAVTAVTWLSWFPFI) traverse the membrane as a helical segment. At 324 to 354 (QYNTDWMGREIYHGEPQGTAAKADVYDAGVR) the chain is on the extracellular side. The helical transmembrane segment at 355 to 375 (EGAMGLLFCSVALGVTSFVIP) threads the bilayer. Residues 376 to 384 (KLCRRLTSK) lie on the Cytoplasmic side of the membrane. The chain crosses the membrane as a helical span at residues 385 to 405 (VVWSISNFLVFALMAVMVAVG). At 406–429 (MVSMRGYRPSLAAGLTGPDPTLKA) the chain is on the extracellular side. Residues 430-450 (VALVVFALIGIPQAVLFSVPW) traverse the membrane as a helical segment. At 451–465 (AVASEVTAEEGGGQG) the chain is on the cytoplasmic side. Residues 466-486 (LAIGVLNIAIVVPQLVIALTA) traverse the membrane as a helical segment. The Extracellular portion of the chain corresponds to 487–498 (GPIDGAFNKGNT). Residues 499 to 519 (PAFGIGGAFAFICGVLALIWL) traverse the membrane as a helical segment. The Cytoplasmic segment spans residues 520-535 (PKTRGVSNAAVVAGGH).

Belongs to the glycoside-pentoside-hexuronide (GPH) cation symporter transporter (TC 2.A.2.4) family. Homodimer. In terms of tissue distribution, widely expressed. Highest expression in sink leaves and lowest in germinating seeds.

The protein resides in the cell membrane. It functions in the pathway glycan biosynthesis; sucrose metabolism. Its function is as follows. Responsible for the transport of sucrose into the cell, with the concomitant uptake of protons (symport system). Can also transport other glucosides such as maltose, arbutin, salicin, helicin, alpha-phenylglucoside and beta-phenylglucoside. The protein is Sucrose transport protein SUT5 (SUT5) of Oryza sativa subsp. japonica (Rice).